We begin with the raw amino-acid sequence, 391 residues long: Acetylgalactosaminyl-O-glycosyl-glycoprotein beta-1,3-N-acetylglucosaminyltransferase (391 aa).

At 1-11 (MALPSSRRFKS) the chain is on the cytoplasmic side. Residues 12–32 (PTTLAFFLVGVTLVVLNQWFL) traverse the membrane as a helical; Signal-anchor for type II membrane protein segment. The Lumenal segment spans residues 33 to 391 (QEHRQEKAKG…TAGEQNPDAH (359 aa)). 2 N-linked (GlcNAc...) asparagine glycosylation sites follow: N68 and N191.

It belongs to the glycosyltransferase 31 family.

It localises to the golgi apparatus membrane. It carries out the reaction a 3-O-[N-acetyl-alpha-D-galactosaminyl]-L-threonyl-[protein] + UDP-N-acetyl-alpha-D-glucosamine = a 3-O-[N-acetyl-beta-D-glucosaminyl-(1-&gt;3)-N-acetyl-alpha-D-galactosaminyl]-L-threonyl-[protein] + UDP + H(+). It catalyses the reaction a 3-O-[N-acetyl-alpha-D-galactosaminyl]-L-seryl-[protein] + UDP-N-acetyl-alpha-D-glucosamine = 3-O-[N-acetyl-beta-D-glucosaminyl-(1-&gt;3)-N-acetyl-alpha-D-galactosaminyl]-L-seryl-[protein] + UDP + H(+). The protein operates within protein modification; protein glycosylation. Beta-1,3-N-acetylglucosaminyltransferase that synthesizes the core 3 structure of the O-glycan, an important precursor in the biosynthesis of mucin-type glycoproteins. Plays an important role in the synthesis of mucin-type O-glycans in digestive organs. This is Acetylgalactosaminyl-O-glycosyl-glycoprotein beta-1,3-N-acetylglucosaminyltransferase (B3gnt6) from Mus musculus (Mouse).